The primary structure comprises 130 residues: Small ribosomal subunit protein uS11 (130 aa).

It belongs to the universal ribosomal protein uS11 family. Part of the 30S ribosomal subunit. Interacts with proteins S7 and S18. Binds to IF-3.

Functionally, located on the platform of the 30S subunit, it bridges several disparate RNA helices of the 16S rRNA. Forms part of the Shine-Dalgarno cleft in the 70S ribosome. The polypeptide is Small ribosomal subunit protein uS11 (Xylella fastidiosa (strain M12)).